A 156-amino-acid polypeptide reads, in one-letter code: Calglandulin (156 aa).

EF-hand domains are found at residues 8–43 (EQIT…IGIN), 44–79 (PTKR…YHEK), 82–117 (NQDE…AGEP), and 118–153 (LNEH…ESFK). D131, D133, D135, T137, and E142 together coordinate Ca(2+).

The protein belongs to the calmodulin family. Calglandulin subfamily. In terms of tissue distribution, expressed by the venom gland.

It is found in the cytoplasm. In terms of biological role, may be involved in the cellular control mechanism of the secretion of toxins from the gland into the venom. The sequence is that of Calglandulin from Hoplocephalus stephensii (Stephens's banded snake).